The chain runs to 460 residues: Benzyl alcohol O-benzoyltransferase (460 aa).

Residues histidine 167 and aspartate 382 each act as proton acceptor in the active site.

This sequence belongs to the plant acyltransferase family.

The enzyme catalyses benzyl alcohol + benzoyl-CoA = benzyl benzoate + CoA. Probably involved in the formation of volatile ester benzylbenzoate. In Nicotiana tabacum (Common tobacco), this protein is Benzyl alcohol O-benzoyltransferase (HSR201).